We begin with the raw amino-acid sequence, 342 residues long: Cytosolic Fe-S cluster assembly factor NBP35 (342 aa).

The disordered stretch occupies residues 1-45 (MGPSLETPEPVEDVLANPLKQKPQLVAPEPEHCPGPESEQAGTAD). The [4Fe-4S] cluster site is built by C33, C47, C50, and C56. Residue 86–93 (GKGGVGKS) coordinates ATP. [4Fe-4S] cluster-binding residues include C259 and C262.

The protein belongs to the Mrp/NBP35 ATP-binding proteins family. NUBP1/NBP35 subfamily. Heterotetramer of 2 NBP35 and 2 CFD1 chains. The cofactor is [4Fe-4S] cluster.

The protein localises to the cytoplasm. Its function is as follows. Component of the cytosolic iron-sulfur (Fe/S) protein assembly (CIA) machinery. Required for maturation of extramitochondrial Fe-S proteins. The NBP35-CFD1 heterotetramer forms a Fe-S scaffold complex, mediating the de novo assembly of an Fe-S cluster and its transfer to target apoproteins. In Chaetomium globosum (strain ATCC 6205 / CBS 148.51 / DSM 1962 / NBRC 6347 / NRRL 1970) (Soil fungus), this protein is Cytosolic Fe-S cluster assembly factor NBP35.